The chain runs to 463 residues: L-seryl-tRNA(Sec) selenium transferase (463 aa).

Lysine 295 carries the post-translational modification N6-(pyridoxal phosphate)lysine.

This sequence belongs to the SelA family. As to quaternary structure, homodecamer; pentamer of dimers. Binds only one seryl-tRNA(Sec) per dimer. Requires pyridoxal 5'-phosphate as cofactor.

The protein localises to the cytoplasm. The enzyme catalyses L-seryl-tRNA(Sec) + selenophosphate + H(+) = L-selenocysteinyl-tRNA(Sec) + phosphate. Its pathway is aminoacyl-tRNA biosynthesis; selenocysteinyl-tRNA(Sec) biosynthesis; selenocysteinyl-tRNA(Sec) from L-seryl-tRNA(Sec) (bacterial route): step 1/1. Its function is as follows. Converts seryl-tRNA(Sec) to selenocysteinyl-tRNA(Sec) required for selenoprotein biosynthesis. This Serratia proteamaculans (strain 568) protein is L-seryl-tRNA(Sec) selenium transferase.